A 162-amino-acid polypeptide reads, in one-letter code: Phosphopantetheine adenylyltransferase (162 aa).

S9 is a substrate binding site. Residues 9-10 (SF) and H17 contribute to the ATP site. The substrate site is built by K41, L77, and K91. Residues 92–94 (GLR), E102, and 126–132 (YAFLSSS) contribute to the ATP site.

The protein belongs to the bacterial CoaD family. Homohexamer. It depends on Mg(2+) as a cofactor.

It is found in the cytoplasm. It carries out the reaction (R)-4'-phosphopantetheine + ATP + H(+) = 3'-dephospho-CoA + diphosphate. Its pathway is cofactor biosynthesis; coenzyme A biosynthesis; CoA from (R)-pantothenate: step 4/5. Reversibly transfers an adenylyl group from ATP to 4'-phosphopantetheine, yielding dephospho-CoA (dPCoA) and pyrophosphate. The sequence is that of Phosphopantetheine adenylyltransferase from Parafrankia sp. (strain EAN1pec).